We begin with the raw amino-acid sequence, 274 residues long: 2-dehydro-3-deoxyphosphooctonate aldolase (274 aa).

The protein belongs to the KdsA family.

The protein resides in the cytoplasm. The catalysed reaction is D-arabinose 5-phosphate + phosphoenolpyruvate + H2O = 3-deoxy-alpha-D-manno-2-octulosonate-8-phosphate + phosphate. It participates in carbohydrate biosynthesis; 3-deoxy-D-manno-octulosonate biosynthesis; 3-deoxy-D-manno-octulosonate from D-ribulose 5-phosphate: step 2/3. The protein operates within bacterial outer membrane biogenesis; lipopolysaccharide biosynthesis. This chain is 2-dehydro-3-deoxyphosphooctonate aldolase, found in Rickettsia peacockii (strain Rustic).